Consider the following 415-residue polypeptide: Tyrosine--tRNA ligase (415 aa).

An L-tyrosine-binding site is contributed by tyrosine 34. Positions 39–48 match the 'HIGH' region motif; the sequence is PTADSLHLGH. 2 residues coordinate L-tyrosine: tyrosine 164 and glutamine 168. The 'KMSKS' region motif lies at 226 to 230; the sequence is KFGKS. Lysine 229 is a binding site for ATP. Residues 348 to 415 enclose the S4 RNA-binding domain; sequence KNVVDFLVDG…KKKYFLGKVK (68 aa).

It belongs to the class-I aminoacyl-tRNA synthetase family. TyrS type 1 subfamily. In terms of assembly, homodimer.

It is found in the cytoplasm. The enzyme catalyses tRNA(Tyr) + L-tyrosine + ATP = L-tyrosyl-tRNA(Tyr) + AMP + diphosphate + H(+). Its function is as follows. Catalyzes the attachment of tyrosine to tRNA(Tyr) in a two-step reaction: tyrosine is first activated by ATP to form Tyr-AMP and then transferred to the acceptor end of tRNA(Tyr). The chain is Tyrosine--tRNA ligase from Leuconostoc mesenteroides subsp. mesenteroides (strain ATCC 8293 / DSM 20343 / BCRC 11652 / CCM 1803 / JCM 6124 / NCDO 523 / NBRC 100496 / NCIMB 8023 / NCTC 12954 / NRRL B-1118 / 37Y).